The primary structure comprises 429 residues: Histidinol dehydrogenase (429 aa).

3 residues coordinate NAD(+): Tyr-131, Gln-193, and Asn-216. Substrate is bound by residues Ser-239, Gln-261, and His-264. The Zn(2+) site is built by Gln-261 and His-264. Residues Glu-327 and His-328 each act as proton acceptor in the active site. His-328, Asp-361, Glu-415, and His-420 together coordinate substrate. Residue Asp-361 participates in Zn(2+) binding. Residue His-420 coordinates Zn(2+).

Belongs to the histidinol dehydrogenase family. The cofactor is Zn(2+).

It carries out the reaction L-histidinol + 2 NAD(+) + H2O = L-histidine + 2 NADH + 3 H(+). Its pathway is amino-acid biosynthesis; L-histidine biosynthesis; L-histidine from 5-phospho-alpha-D-ribose 1-diphosphate: step 9/9. In terms of biological role, catalyzes the sequential NAD-dependent oxidations of L-histidinol to L-histidinaldehyde and then to L-histidine. In Methanocaldococcus jannaschii (strain ATCC 43067 / DSM 2661 / JAL-1 / JCM 10045 / NBRC 100440) (Methanococcus jannaschii), this protein is Histidinol dehydrogenase (hisD).